Reading from the N-terminus, the 165-residue chain is Xanthine-guanine phosphoribosyltransferase (165 aa).

5-phospho-alpha-D-ribose 1-diphosphate is bound by residues 41–42 (RG) and 98–106 (DDLTDTGKT). Mg(2+) is bound at residue D99. Guanine-binding residues include D102 and I145. Xanthine contacts are provided by D102 and I145. Residues 102–106 (DTGKT) and 144–145 (WI) contribute to the GMP site.

Belongs to the purine/pyrimidine phosphoribosyltransferase family. XGPT subfamily. In terms of assembly, homotetramer. Mg(2+) is required as a cofactor.

Its subcellular location is the cell inner membrane. The catalysed reaction is GMP + diphosphate = guanine + 5-phospho-alpha-D-ribose 1-diphosphate. The enzyme catalyses XMP + diphosphate = xanthine + 5-phospho-alpha-D-ribose 1-diphosphate. It catalyses the reaction IMP + diphosphate = hypoxanthine + 5-phospho-alpha-D-ribose 1-diphosphate. It functions in the pathway purine metabolism; GMP biosynthesis via salvage pathway; GMP from guanine: step 1/1. It participates in purine metabolism; XMP biosynthesis via salvage pathway; XMP from xanthine: step 1/1. Its function is as follows. Purine salvage pathway enzyme that catalyzes the transfer of the ribosyl-5-phosphate group from 5-phospho-alpha-D-ribose 1-diphosphate (PRPP) to the N9 position of the 6-oxopurines guanine and xanthine to form the corresponding ribonucleotides GMP (guanosine 5'-monophosphate) and XMP (xanthosine 5'-monophosphate), with the release of PPi. To a lesser extent, also acts on hypoxanthine. This is Xanthine-guanine phosphoribosyltransferase from Brucella suis (strain ATCC 23445 / NCTC 10510).